The primary structure comprises 184 residues: Potassium-transporting ATPase KdpC subunit (184 aa).

The chain crosses the membrane as a helical span at residues 10 to 30 (LTFLMVVLFAVIYPLAIYGIA).

It belongs to the KdpC family. The system is composed of three essential subunits: KdpA, KdpB and KdpC.

The protein resides in the cell inner membrane. Functionally, part of the high-affinity ATP-driven potassium transport (or Kdp) system, which catalyzes the hydrolysis of ATP coupled with the electrogenic transport of potassium into the cytoplasm. This subunit acts as a catalytic chaperone that increases the ATP-binding affinity of the ATP-hydrolyzing subunit KdpB by the formation of a transient KdpB/KdpC/ATP ternary complex. The chain is Potassium-transporting ATPase KdpC subunit from Flavobacterium psychrophilum (strain ATCC 49511 / DSM 21280 / CIP 103535 / JIP02/86).